Here is a 369-residue protein sequence, read N- to C-terminus: Phospho-N-acetylmuramoyl-pentapeptide-transferase (369 aa).

Transmembrane regions (helical) follow at residues 2–22 (IALLIGAGVALLVALIGTPLF), 55–75 (TVVVAAVLISYFVTHLIMWMM), 86–106 (GLLLLFLMVGMGFVGFLDDFI), 120–140 (AKLILQAAVGIIFAVLVLQFP), 163–183 (LAFGGTVVGAILFVLWSNLII), 196–216 (LDGLAAGASIMVFGAYTIMGI), 239–259 (PMDLALLAAILSAALVGFLWW), 266–286 (IFMGDTGSLAIGGAVAAFAIL), 291–311 (LLLAFIGGLFVLITLSVIIQV), and 348–368 (ILAGLFVAAGLGIFYAEWVVL).

Belongs to the glycosyltransferase 4 family. MraY subfamily. It depends on Mg(2+) as a cofactor.

The protein localises to the cell membrane. The catalysed reaction is UDP-N-acetyl-alpha-D-muramoyl-L-alanyl-gamma-D-glutamyl-meso-2,6-diaminopimeloyl-D-alanyl-D-alanine + di-trans,octa-cis-undecaprenyl phosphate = di-trans,octa-cis-undecaprenyl diphospho-N-acetyl-alpha-D-muramoyl-L-alanyl-D-glutamyl-meso-2,6-diaminopimeloyl-D-alanyl-D-alanine + UMP. It participates in cell wall biogenesis; peptidoglycan biosynthesis. Catalyzes the initial step of the lipid cycle reactions in the biosynthesis of the cell wall peptidoglycan: transfers peptidoglycan precursor phospho-MurNAc-pentapeptide from UDP-MurNAc-pentapeptide onto the lipid carrier undecaprenyl phosphate, yielding undecaprenyl-pyrophosphoryl-MurNAc-pentapeptide, known as lipid I. The protein is Phospho-N-acetylmuramoyl-pentapeptide-transferase of Paenarthrobacter aurescens (strain TC1).